The sequence spans 104 residues: Large ribosomal subunit protein uL24 (104 aa).

The protein belongs to the universal ribosomal protein uL24 family. In terms of assembly, part of the 50S ribosomal subunit.

One of two assembly initiator proteins, it binds directly to the 5'-end of the 23S rRNA, where it nucleates assembly of the 50S subunit. In terms of biological role, one of the proteins that surrounds the polypeptide exit tunnel on the outside of the subunit. The sequence is that of Large ribosomal subunit protein uL24 from Colwellia psychrerythraea (strain 34H / ATCC BAA-681) (Vibrio psychroerythus).